The sequence spans 162 residues: Flagellar assembly factor FliW (162 aa).

The protein belongs to the FliW family. Interacts with translational regulator CsrA and flagellin(s).

The protein resides in the cytoplasm. Acts as an anti-CsrA protein, binds CsrA and prevents it from repressing translation of its target genes, one of which is flagellin. Binds to flagellin and participates in the assembly of the flagellum. In Alkaliphilus metalliredigens (strain QYMF), this protein is Flagellar assembly factor FliW.